The primary structure comprises 445 residues: Proline--tRNA ligase (445 aa).

This sequence belongs to the class-II aminoacyl-tRNA synthetase family. ProS type 2 subfamily. Homodimer.

It localises to the cytoplasm. It carries out the reaction tRNA(Pro) + L-proline + ATP = L-prolyl-tRNA(Pro) + AMP + diphosphate. In terms of biological role, catalyzes the attachment of proline to tRNA(Pro) in a two-step reaction: proline is first activated by ATP to form Pro-AMP and then transferred to the acceptor end of tRNA(Pro). The chain is Proline--tRNA ligase from Cereibacter sphaeroides (strain ATCC 17023 / DSM 158 / JCM 6121 / CCUG 31486 / LMG 2827 / NBRC 12203 / NCIMB 8253 / ATH 2.4.1.) (Rhodobacter sphaeroides).